The following is a 708-amino-acid chain: Ribosomal RNA large subunit methyltransferase K/L (708 aa).

In terms of domain architecture, THUMP spans 43–154 (QGYQITLWTR…RGKITIGINF (112 aa)).

The protein belongs to the methyltransferase superfamily. RlmKL family.

The protein resides in the cytoplasm. It carries out the reaction guanosine(2445) in 23S rRNA + S-adenosyl-L-methionine = N(2)-methylguanosine(2445) in 23S rRNA + S-adenosyl-L-homocysteine + H(+). The enzyme catalyses guanosine(2069) in 23S rRNA + S-adenosyl-L-methionine = N(2)-methylguanosine(2069) in 23S rRNA + S-adenosyl-L-homocysteine + H(+). In terms of biological role, specifically methylates the guanine in position 2445 (m2G2445) and the guanine in position 2069 (m7G2069) of 23S rRNA. In Shewanella amazonensis (strain ATCC BAA-1098 / SB2B), this protein is Ribosomal RNA large subunit methyltransferase K/L.